Consider the following 2058-residue polypeptide: Unconventional myosin-X (2058 aa).

Met-1 carries the post-translational modification N-acetylmethionine. Residues 63–739 (EGVDDMASLT…LEQKLEKRRE (677 aa)) enclose the Myosin motor domain. ATP-binding positions include Asn-104, Tyr-113, 160-165 (GAGKTE), and Asn-215. The actin-binding stretch occupies residues 619-641 (LHSLMATLSSSNPFFVRCIKPNM). 3 IQ domains span residues 742–763 (VSHAAMVIRAHVLGFLARKQYR), 764–787 (KVLYCVVIIQKNYRAFLLRRRFLH), and 788–817 (LKKAAIVFQKQLRGQIARRVYRQLLAEKRE). Residues 814–883 (EKREQEEKKK…LTRELEKQKE (70 aa)) are SAH. 2 disordered regions span residues 819–840 (EEKKKQEEEEKKKREEEERERE) and 847–866 (ELRAQQEEETRKQQELEALQ). The span at 847 to 861 (ELRAQQEEETRKQQE) shows a compositional bias: basic and acidic residues. Residues 884–934 (NKQVEEILRLEKEIEDLQRMKEQQELSLTEASLQKLQERRDQELRRLEEEA) adopt a coiled-coil conformation. Residues Ser-962, Ser-965, and Ser-968 each carry the phosphoserine modification. Residues 964–1090 (GSEFSSELAE…DLPSPDGDYD (127 aa)) are disordered. Residues 989-1003 (PEEEVDEGFEADDDA) are compositionally biased toward acidic residues. Residues 1040–1049 (VVPTSPSADS) show a composition bias toward polar residues. Residues 1060–1071 (SGSLHNSSSGES) are compositionally biased toward low complexity. A Phosphothreonine modification is found at Thr-1158. PH domains follow at residues 1212–1310 (EALK…QVHA) and 1392–1497 (EFIV…NVTD). Residues 1547-1695 (LPYGDINLNL…PSRDEIEALI (149 aa)) enclose the MyTH4 domain. The FERM domain occupies 1700–2044 (MTSTVYCHGG…AYISMIVKKR (345 aa)).

The protein belongs to the TRAFAC class myosin-kinesin ATPase superfamily. Myosin family. Monomer, when in an inactive conformation in the cytosol. Homodimer in its active, membrane-bound conformation; antiparallel coiled coil-mediated dimer formation. Interacts strongly with CALM3 and weakly with CALM, the CALM3 interaction is essential for function in filopodial extension and motility. Interacts with ECPAS. Interacts with NEO1. Interacts with ITGB1 and ITGB3. Interacts with VASP. Interacts with DCC and ITGB5; the presence of DCC inhibits ITGB5 binding. Interacts with tubulin; ITGB5 or DCC binding inhibits tubulin binding. Post-translationally, the initiator methionine for isoform Headless is removed. In terms of tissue distribution, ubiquitous.

It localises to the cytoplasm. Its subcellular location is the cytosol. The protein resides in the cell projection. It is found in the lamellipodium. The protein localises to the ruffle. It localises to the cytoskeleton. Its subcellular location is the filopodium tip. The protein resides in the cell cortex. It is found in the filopodium membrane. Myosins are actin-based motor molecules with ATPase activity. Unconventional myosins serve in intracellular movements. MYO10 binds to actin filaments and actin bundles and functions as a plus end-directed motor. Moves with higher velocity and takes larger steps on actin bundles than on single actin filaments. The tail domain binds to membranous compartments containing phosphatidylinositol 3,4,5-trisphosphate or integrins, and mediates cargo transport along actin filaments. Regulates cell shape, cell spreading and cell adhesion. Stimulates the formation and elongation of filopodia. In hippocampal neurons it induces the formation of dendritic filopodia by trafficking the actin-remodeling protein VASP to the tips of filopodia, where it promotes actin elongation. Plays a role in formation of the podosome belt in osteoclasts. Its function is as follows. Functions as a dominant-negative regulator of isoform 1, suppressing its filopodia-inducing and axon outgrowth-promoting activities. In hippocampal neurons, it increases VASP retention in spine heads to induce spine formation and spine head expansion. The protein is Unconventional myosin-X (MYO10) of Homo sapiens (Human).